Consider the following 567-residue polypeptide: TPR repeat-containing protein MJ1428 (567 aa).

13 TPR repeats span residues 14 to 47 (YEDW…KNTN), 48 to 81 (PIDW…SPSN), 83 to 115 (YFAY…IKNE), 116 to 148 (ELFE…ANSK), 150 to 183 (LNAL…NPSH), 199 to 234 (INSY…DENS), 236 to 268 (ISYY…FNRS), 269 to 301 (LYYA…NSQN), 303 to 335 (YAYF…YLEE), 344 to 379 (LNLY…ENSS), 380 to 412 (RWWY…NPKD), 414 to 446 (STLK…VNSL), and 505 to 538 (AYIY…EMYR).

The protein is TPR repeat-containing protein MJ1428 of Methanocaldococcus jannaschii (strain ATCC 43067 / DSM 2661 / JAL-1 / JCM 10045 / NBRC 100440) (Methanococcus jannaschii).